We begin with the raw amino-acid sequence, 213 residues long: Pyridoxine/pyridoxamine 5'-phosphate oxidase (213 aa).

Substrate-binding positions include 9–12 (RKSY) and Lys-67. Residues 62 to 67 (RVVLIK), 77 to 78 (YT), Arg-83, and Lys-84 contribute to the FMN site. Residues Tyr-124, Arg-128, and Ser-132 each contribute to the substrate site. Residues 141–142 (QS) and Trp-185 each bind FMN. 191–193 (RLH) lines the substrate pocket. Arg-195 is an FMN binding site.

The protein belongs to the pyridoxamine 5'-phosphate oxidase family. Homodimer. The cofactor is FMN.

It carries out the reaction pyridoxamine 5'-phosphate + O2 + H2O = pyridoxal 5'-phosphate + H2O2 + NH4(+). The enzyme catalyses pyridoxine 5'-phosphate + O2 = pyridoxal 5'-phosphate + H2O2. Its pathway is cofactor metabolism; pyridoxal 5'-phosphate salvage; pyridoxal 5'-phosphate from pyridoxamine 5'-phosphate: step 1/1. The protein operates within cofactor metabolism; pyridoxal 5'-phosphate salvage; pyridoxal 5'-phosphate from pyridoxine 5'-phosphate: step 1/1. Functionally, catalyzes the oxidation of either pyridoxine 5'-phosphate (PNP) or pyridoxamine 5'-phosphate (PMP) into pyridoxal 5'-phosphate (PLP). This is Pyridoxine/pyridoxamine 5'-phosphate oxidase from Methylibium petroleiphilum (strain ATCC BAA-1232 / LMG 22953 / PM1).